The sequence spans 276 residues: F-actin-capping protein subunit alpha (276 aa).

It belongs to the F-actin-capping protein alpha subunit family. In terms of assembly, heterodimer of an alpha and a beta subunit.

It localises to the cytoplasm. Its subcellular location is the cytoskeleton. In terms of biological role, F-actin-capping proteins bind in a Ca(2+)-independent manner to the fast growing ends of actin filaments (barbed end) thereby blocking the exchange of subunits at these ends. Unlike other capping proteins (such as gelsolin and severin), these proteins do not sever actin filaments. The chain is F-actin-capping protein subunit alpha (cap1) from Aspergillus fumigatus (strain ATCC MYA-4609 / CBS 101355 / FGSC A1100 / Af293) (Neosartorya fumigata).